Here is a 153-residue protein sequence, read N- to C-terminus: Small ribosomal subunit protein uS13 (153 aa).

Belongs to the universal ribosomal protein uS13 family. Part of the 30S ribosomal subunit. Forms a loose heterodimer with protein S19. Forms two bridges to the 50S subunit in the 70S ribosome.

Functionally, located at the top of the head of the 30S subunit, it contacts several helices of the 16S rRNA. In the 70S ribosome it contacts the 23S rRNA (bridge B1a) and protein L5 of the 50S subunit (bridge B1b), connecting the 2 subunits; these bridges are implicated in subunit movement. This Pyrobaculum islandicum (strain DSM 4184 / JCM 9189 / GEO3) protein is Small ribosomal subunit protein uS13.